A 319-amino-acid chain; its full sequence is Probable cystathionine gamma-synthase (319 aa).

An N6-(pyridoxal phosphate)lysine modification is found at Lys197.

Belongs to the trans-sulfuration enzymes family. As to quaternary structure, homotetramer. Pyridoxal 5'-phosphate is required as a cofactor.

It is found in the cytoplasm. It carries out the reaction O-succinyl-L-homoserine + L-cysteine = L,L-cystathionine + succinate + H(+). Catalyzes the formation of L-cystathionine from O-succinyl-L-homoserine (OSHS) and L-cysteine, via a gamma-replacement reaction. In the absence of thiol, catalyzes gamma-elimination to form 2-oxobutanoate, succinate and ammonia. The polypeptide is Probable cystathionine gamma-synthase (metB) (Herpetosiphon aurantiacus (Herpetosiphon giganteus)).